The sequence spans 259 residues: Pyrroloquinoline-quinone synthase (259 aa).

The protein belongs to the PqqC family.

It catalyses the reaction 6-(2-amino-2-carboxyethyl)-7,8-dioxo-1,2,3,4,7,8-hexahydroquinoline-2,4-dicarboxylate + 3 O2 = pyrroloquinoline quinone + 2 H2O2 + 2 H2O + H(+). Its pathway is cofactor biosynthesis; pyrroloquinoline quinone biosynthesis. Ring cyclization and eight-electron oxidation of 3a-(2-amino-2-carboxyethyl)-4,5-dioxo-4,5,6,7,8,9-hexahydroquinoline-7,9-dicarboxylic-acid to PQQ. In Bradyrhizobium diazoefficiens (strain JCM 10833 / BCRC 13528 / IAM 13628 / NBRC 14792 / USDA 110), this protein is Pyrroloquinoline-quinone synthase.